The chain runs to 169 residues: Cell division inhibitor SulA (169 aa).

Residues 106–112 form a ftsZ binding region; the sequence is ALRTGNY. A lon protease binding region spans residues 162-169; it reads KIHSNLYH.

It belongs to the SulA family. Interacts with FtsZ. Is rapidly cleaved and degraded by the Lon protease once DNA damage is repaired.

Component of the SOS system and an inhibitor of cell division. Accumulation of SulA causes rapid cessation of cell division and the appearance of long, non-septate filaments. In the presence of GTP, binds a polymerization-competent form of FtsZ in a 1:1 ratio, thus inhibiting FtsZ polymerization and therefore preventing it from participating in the assembly of the Z ring. This mechanism prevents the premature segregation of damaged DNA to daughter cells during cell division. The polypeptide is Cell division inhibitor SulA (Salmonella dublin (strain CT_02021853)).